The sequence spans 61 residues: Large ribosomal subunit protein bL28 (61 aa).

This sequence belongs to the bacterial ribosomal protein bL28 family.

The protein is Large ribosomal subunit protein bL28 (rpmB) of Geobacillus stearothermophilus (Bacillus stearothermophilus).